The chain runs to 539 residues: Sorting nexin-27 (539 aa).

The interval 1-40 is disordered; sequence MADEDGEGIHPSTPHRNGGGGGGSGLHCAGNGGGGGGGPR. Positions 17-39 are enriched in gly residues; sequence NGGGGGGSGLHCAGNGGGGGGGP. Residues 41–134 enclose the PDZ domain; sequence VVRIVKSESG…ELILTVLSVP (94 aa). A phosphoserine mark is found at S49 and S60. The PX domain maps to 159–267; that stretch reads QAVPISVPTY…EFLSESDENY (109 aa). The region spanning 271–360 is the Ras-associating domain; that stretch reads SDVELRVALP…TCLTIRKWLF (90 aa). The segment at 271–360 is FERM-like region F1; sequence SDVELRVALP…TCLTIRKWLF (90 aa). The FERM-like region F2 stretch occupies residues 371–419; the sequence is NDLAVTYFFHQAVDDVKKGYIKAEEKSYQLQKLYEQRKMVMYLNMLRTC. Residues 423-523 are FERM-like region F3; that stretch reads NEIIFPHCAC…RVFCELKWRK (101 aa).

Core component of the SNX27-retromer, a multiprotein complex composed of SNX27, the WASH complex and the retromer complex. Interacts (via PDZ domain) with a number of target transmembrane proteins (via PDZ-binding motif): ABCC4, ADRB2, ARHGEF7, GRIA1, GRIA2, GRIN1, GRIN2A GRIN2C, KCNJ6, KCNJ9 and SLC2A1/GLUT1. Interacts (via the FERM-like regions) with the WASH complex. Interacts with SNX1. Interacts with CYTIP. Interacts with DGKZ. Interacts with MCC. Interacts (via PDZ domains) with SLC9A3; directs SLC9A3 membrane insertion from early endosomes to the plasma membrane. Isoform 1 is predominantly expressed in the testis, whereas isoform 2 is predominant in various brain regions, including, neocortex, paleocortex, striatum, hippocampus, cerebellum and brain stem. Expressed in cells of hematopoietic origin.

Its subcellular location is the early endosome membrane. The protein resides in the cytoplasm. It is found in the cytosol. Functionally, involved in the retrograde transport from endosome to plasma membrane, a trafficking pathway that promotes the recycling of internalized transmembrane proteins. Following internalization, endocytosed transmembrane proteins are delivered to early endosomes and recycled to the plasma membrane instead of being degraded in lysosomes. SNX27 specifically binds and directs sorting of a subset of transmembrane proteins containing a PDZ-binding motif at the C-terminus: following interaction with target transmembrane proteins, associates with the retromer complex, preventing entry into the lysosomal pathway, and promotes retromer-tubule based plasma membrane recycling. SNX27 also binds with the WASH complex. Interacts with membranes containing phosphatidylinositol-3-phosphate (PtdIns(3P)). May participate in establishment of natural killer cell polarity. Recruits CYTIP to early endosomes. The sequence is that of Sorting nexin-27 (Snx27) from Rattus norvegicus (Rat).